The sequence spans 119 residues: Large ribosomal subunit protein uL18 (119 aa).

Belongs to the universal ribosomal protein uL18 family. As to quaternary structure, part of the 50S ribosomal subunit; part of the 5S rRNA/L5/L18/L25 subcomplex. Contacts the 5S and 23S rRNAs.

In terms of biological role, this is one of the proteins that bind and probably mediate the attachment of the 5S RNA into the large ribosomal subunit, where it forms part of the central protuberance. The sequence is that of Large ribosomal subunit protein uL18 from Clostridium botulinum (strain ATCC 19397 / Type A).